Consider the following 64-residue polypeptide: uncharacterized protein (64 aa).

Its subcellular location is the host cytoplasm. This is an uncharacterized protein from Enterobacteriaceae (Bacteriophage Mu).